A 99-amino-acid polypeptide reads, in one-letter code: Acylphosphatase (99 aa).

The 93-residue stretch at 5-97 folds into the Acylphosphatase-like domain; it reads IRQVMISGRV…QPGERFSILS (93 aa). Catalysis depends on residues Arg-20 and Asn-38.

This sequence belongs to the acylphosphatase family.

The catalysed reaction is an acyl phosphate + H2O = a carboxylate + phosphate + H(+). The sequence is that of Acylphosphatase (acyP) from Rhodopseudomonas palustris (strain ATCC BAA-98 / CGA009).